Consider the following 744-residue polypeptide: Zinc finger protein 483 (744 aa).

The 83-residue stretch at 52–134 folds into the SCAN box domain; it reads RQRFRWFCYS…TLIEDLTQML (83 aa). A disordered region spans residues 137 to 156; sequence KDPVSQDSTVSQEENSKEDK. The KRAB domain occupies 170-241; the sequence is ITLKDVAVNF…EEVSKSSRLD (72 aa). Disordered regions lie at residues 263 to 308 and 350 to 385; these read ESQQ…SPFG and KEKT…KIHL. Polar residues predominate over residues 277-293; the sequence is NQGNSKGRVAQNKTLGS. Basic and acidic residues-rich tracts occupy residues 298 to 308 and 350 to 363; these read KKFDPDKSPFG and KEKT…KSND. 11 consecutive C2H2-type zinc fingers follow at residues 439–461, 467–489, 495–517, 523–545, 551–573, 579–601, 607–629, 635–657, 663–685, 691–713, and 719–741; these read HKCS…RRIH, YMCN…HRTH, FKCD…QRIH, YKCK…QRIH, YTCS…QRIH, YKCG…QRIH, YLCN…QRLH, YKCN…QRIH, YKCK…HRIH, YECN…LKIH, and YECN…RGFH.

This sequence belongs to the krueppel C2H2-type zinc-finger protein family.

It is found in the nucleus. Its function is as follows. May be involved in transcriptional regulation. The polypeptide is Zinc finger protein 483 (ZNF483) (Homo sapiens (Human)).